The primary structure comprises 602 residues: Cholinesterase (602 aa).

Residues 1-28 (MQSKGTIISIQFLLRFLLLWVLIGKSHT) form the signal peptide. Residue asparagine 85 is glycosylated (N-linked (GlcNAc...) asparagine). A disulfide bridge links cysteine 93 with cysteine 120. An N-linked (GlcNAc...) asparagine glycan is attached at asparagine 134. 144–145 (GG) provides a ligand contact to substrate. Residue serine 226 is the Acyl-ester intermediate of the active site. Position 226 is a phosphoserine (serine 226). N-linked (GlcNAc...) asparagine glycans are attached at residues asparagine 269 and asparagine 284. A disulfide bond links cysteine 280 and cysteine 291. Residue glutamate 353 is the Charge relay system of the active site. Asparagine 369 carries N-linked (GlcNAc...) asparagine glycosylation. Cysteine 428 and cysteine 547 form a disulfide bridge. The Charge relay system role is filled by histidine 466. N-linked (GlcNAc...) asparagine glycans are attached at residues asparagine 483, asparagine 509, asparagine 513, and asparagine 514.

This sequence belongs to the type-B carboxylesterase/lipase family. As to quaternary structure, homotetramer; disulfide-linked. Dimer of dimers.

It is found in the secreted. It carries out the reaction an acylcholine + H2O = a carboxylate + choline + H(+). Esterase with broad substrate specificity. Contributes to the inactivation of the neurotransmitter acetylcholine. Can degrade neurotoxic organophosphate esters. The polypeptide is Cholinesterase (BCHE) (Panthera tigris tigris (Bengal tiger)).